A 74-amino-acid chain; its full sequence is Cytochrome c oxidase copper chaperone 1 (74 aa).

The tract at residues 1–30 (MTDQPAQNGLIPPPTSEPSKAAASAETKPK) is disordered. 2 residues coordinate Cu cation: Cys-34 and Cys-35. The CHCH domain maps to 34–74 (CCACPDTKKLRDECIVEHGESACTKWIEAHKICLRAEGFNV). 2 short sequence motifs (cx9C motif) span residues 37–47 (CPDTKKLRDEC) and 56–66 (CTKWIEAHKIC). 2 disulfides stabilise this stretch: Cys-37-Cys-66 and Cys-47-Cys-56.

This sequence belongs to the COX17 family.

Its subcellular location is the mitochondrion intermembrane space. Functionally, copper chaperone for cytochrome c oxidase (COX). Binds 2 copper ions and delivers them to the Cu(A) site of COX. Can complement the yeast mutant cox17. The sequence is that of Cytochrome c oxidase copper chaperone 1 (COX17-1) from Arabidopsis thaliana (Mouse-ear cress).